The primary structure comprises 745 residues: Isocitrate dehydrogenase [NADP] 2 (745 aa).

The NADP(+) site is built by asparagine 87 and serine 89. 5 residues coordinate D-threo-isocitrate: serine 134, asparagine 137, arginine 141, arginine 147, and lysine 257. Aspartate 352 is a Mg(2+) binding site. Positions 422 and 550 each coordinate D-threo-isocitrate. Mg(2+) is bound by residues aspartate 551 and aspartate 555. NADP(+)-binding residues include glycine 587, serine 588, alanine 589, histidine 592, arginine 603, aspartate 605, and arginine 652.

This sequence belongs to the monomeric-type IDH family. May form homotrimers. Also forms homotetramers at low salt concentration, which are dissociated into homodimers, but not into monomers, at high salt concentration (1 M). It depends on Mg(2+) as a cofactor.

It carries out the reaction D-threo-isocitrate + NADP(+) = 2-oxoglutarate + CO2 + NADPH. Its function is as follows. Catalyzes the oxidative decarboxylation of isocitrate to 2-oxoglutarate and carbon dioxide with the concomitant reduction of NADP(+). Cannot use NAD(+). This Mycobacterium tuberculosis (strain ATCC 25618 / H37Rv) protein is Isocitrate dehydrogenase [NADP] 2.